The sequence spans 590 residues: Ovarian abundant message protein (590 aa).

The disordered stretch occupies residues 1–71 (MQGTDNAPPG…SPGQPLVEEQ (71 aa)). Residues 18 to 29 (SPRRIRHVRRHY) show a composition bias toward basic residues. Tandem repeats lie at residues 66–71 (PLVEEQ), 72–77 (PLVEER), 78–83 (PPVEEQ), 84–89 (PLVEEQ), 90–95 (PLVEEQ), 96–101 (PLVEEQ), 102–107 (PLVEEQ), 108–113 (PLVEGQ), 114–119 (PLVEEQ), 120–125 (PLVEGQ), 126–131 (PPVEGQ), 132–137 (PLVEEQ), 138–143 (PLVEGQ), 144–149 (PLVEGQ), 150–155 (PLVEGQ), 156–161 (PLVEGQ), 162–167 (PLVGGQ), 168–173 (PLVGGQ), 174–179 (PLVEGQ), 180–185 (PLVEGQ), 300–305 (PLAGAP), 306–311 (PLAGVP), 312–317 (PLAVAL), 318–323 (PLAGAP), 324–329 (PLAGVP), 330–335 (PLAGAP), and 336–341 (PLAGAL). The interval 66-185 (PLVEEQPLVE…VEGQPLVEGQ (120 aa)) is 20 X 6 AA tandem repeats of P-[LP]-V-[EG]-[EG]-[QR]. The tract at residues 300–347 (PLAGAPPLAGVPPLAVALPLAGAPPLAGVPPLAGAPPLAGALPRAGVL) is 8 X 6 AA approximate tandem repeats of P-L-A-[GV]-[AV]-[PL]. The 2-8; approximate repeat unit spans residues 342-347 (PRAGVL). 16 tandem repeats follow at residues 348–353 (RRAGVL), 354–359 (RRAGVL), 360–365 (RRAGVL), 366–371 (RRAGVL), 372–377 (RRAGVL), 378–383 (RRAGVL), 384–389 (RRAGVL), 390–395 (RRAGVL), 396–401 (RRAGVL), 402–407 (RRADVL), 408–413 (RRADVV), 419–424 (QQLADV), 425–430 (QRLADV), 431–436 (QRLADV), 437–442 (QRLADV), and 443–448 (QRLADV). The tract at residues 348 to 413 (RRAGVLRRAG…ADVLRRADVV (66 aa)) is 11 X 6 AA tandem repeats of approximate R-R-A-[GD]-V-[LV]. The segment at 419 to 454 (QQLADVQRLADVQRLADVQRLADVQRLADVQRLVCV) is 6 X 6 AA approximate tandem repeats of Q-[QR]-L-A-D-V. The 4-6; approximate repeat unit spans residues 449 to 454 (QRLVCV).

As to expression, somatic ovarian tissue.

The protein is Ovarian abundant message protein (OAM) of Ascaris suum (Pig roundworm).